A 102-amino-acid chain; its full sequence is Large ribosomal subunit protein bL21 (102 aa).

Belongs to the bacterial ribosomal protein bL21 family. Part of the 50S ribosomal subunit. Contacts protein L20.

This protein binds to 23S rRNA in the presence of protein L20. The protein is Large ribosomal subunit protein bL21 of Marinomonas sp. (strain MWYL1).